The following is a 117-amino-acid chain: Large ribosomal subunit protein uL24 (117 aa).

It belongs to the universal ribosomal protein uL24 family. Part of the 50S ribosomal subunit.

One of two assembly initiator proteins, it binds directly to the 5'-end of the 23S rRNA, where it nucleates assembly of the 50S subunit. In terms of biological role, one of the proteins that surrounds the polypeptide exit tunnel on the outside of the subunit. This is Large ribosomal subunit protein uL24 from Trichormus variabilis (strain ATCC 29413 / PCC 7937) (Anabaena variabilis).